Reading from the N-terminus, the 150-residue chain is D-aminoacyl-tRNA deacylase (150 aa).

Residues 138–139 (GP) carry the Gly-cisPro motif, important for rejection of L-amino acids motif.

The protein belongs to the DTD family. Homodimer.

The protein resides in the cytoplasm. The catalysed reaction is glycyl-tRNA(Ala) + H2O = tRNA(Ala) + glycine + H(+). The enzyme catalyses a D-aminoacyl-tRNA + H2O = a tRNA + a D-alpha-amino acid + H(+). Functionally, an aminoacyl-tRNA editing enzyme that deacylates mischarged D-aminoacyl-tRNAs. Also deacylates mischarged glycyl-tRNA(Ala), protecting cells against glycine mischarging by AlaRS. Acts via tRNA-based rather than protein-based catalysis; rejects L-amino acids rather than detecting D-amino acids in the active site. By recycling D-aminoacyl-tRNA to D-amino acids and free tRNA molecules, this enzyme counteracts the toxicity associated with the formation of D-aminoacyl-tRNA entities in vivo and helps enforce protein L-homochirality. This Porphyromonas gingivalis (strain ATCC 33277 / DSM 20709 / CIP 103683 / JCM 12257 / NCTC 11834 / 2561) protein is D-aminoacyl-tRNA deacylase.